We begin with the raw amino-acid sequence, 156 residues long: Snaclec A1 (156 aa).

A signal peptide spans 1-23 (MGRSISVSFGLLVVFLSLSGTGA). 3 disulfide bridges follow: Cys-27/Cys-38, Cys-55/Cys-154, and Cys-129/Cys-146. One can recognise a C-type lectin domain in the interval 34 to 155 (HEGHCYKVFN…CGQPYRFTCE (122 aa)).

Belongs to the snaclec family. Heterodimer; disulfide-linked. As to expression, expressed by the venom gland.

It localises to the secreted. Interferes with one step of hemostasis (modulation of platelet aggregation, or coagulation cascade, for example). The protein is Snaclec A1 of Macrovipera lebetinus (Levantine viper).